A 692-amino-acid polypeptide reads, in one-letter code: Elongation factor G (692 aa).

Residues 8-282 (ERTRNIGIMA…AIVDYLPAPT (275 aa)) form the tr-type G domain. Residues 17–24 (AHIDAGKT), 81–85 (DTPGH), and 135–138 (NKMD) each bind GTP.

It belongs to the TRAFAC class translation factor GTPase superfamily. Classic translation factor GTPase family. EF-G/EF-2 subfamily.

It is found in the cytoplasm. In terms of biological role, catalyzes the GTP-dependent ribosomal translocation step during translation elongation. During this step, the ribosome changes from the pre-translocational (PRE) to the post-translocational (POST) state as the newly formed A-site-bound peptidyl-tRNA and P-site-bound deacylated tRNA move to the P and E sites, respectively. Catalyzes the coordinated movement of the two tRNA molecules, the mRNA and conformational changes in the ribosome. The polypeptide is Elongation factor G (Desulforamulus reducens (strain ATCC BAA-1160 / DSM 100696 / MI-1) (Desulfotomaculum reducens)).